The sequence spans 416 residues: Cysteate synthase (416 aa).

Residue lysine 104 is modified to N6-(pyridoxal phosphate)lysine. Position 130 (asparagine 130) interacts with pyridoxal 5'-phosphate.

It belongs to the threonine synthase family. Cysteate synthase subfamily. As to quaternary structure, homotrimer. Pyridoxal 5'-phosphate is required as a cofactor.

The enzyme catalyses O-phospho-L-serine + sulfite + H(+) = L-cysteate + phosphate. It participates in cofactor biosynthesis; coenzyme M biosynthesis. Functionally, specifically catalyzes the beta-elimination of phosphate from L-phosphoserine and the beta-addition of sulfite to the dehydroalanine intermediate to produce L-cysteate. This chain is Cysteate synthase, found in Methanosarcina barkeri (strain Fusaro / DSM 804).